Here is a 187-residue protein sequence, read N- to C-terminus: Benzene 1,2-dioxygenase subunit beta (187 aa).

This sequence belongs to the bacterial ring-hydroxylating dioxygenase beta subunit family. In terms of assembly, this dioxygenase system consists of four proteins: the two subunits of the hydroxylase component (BnzA and BnzB), a ferredoxin (BnzC) and a ferredoxin reductase (BnzD). [2Fe-2S] cluster is required as a cofactor. Fe cation serves as cofactor.

The catalysed reaction is benzene + NADH + O2 + H(+) = cis-1,2-dihydrobenzene-1,2-diol + NAD(+). It catalyses the reaction toluene + NADH + O2 + H(+) = (1S,2R)-3-methylcyclohexa-3,5-diene-1,2-diol + NAD(+). It functions in the pathway aromatic compound metabolism; benzene degradation; catechol from benzene: step 1/2. The protein operates within xenobiotic degradation; toluene degradation. Its pathway is xenobiotic degradation; xylene degradation. In terms of biological role, catalyzes both the oxidation of benzene and toluene. The beta subunit may be responsible for the substrate specificity of the enzyme. This chain is Benzene 1,2-dioxygenase subunit beta (bnzB), found in Pseudomonas putida (strain ATCC 700007 / DSM 6899 / JCM 31910 / BCRC 17059 / LMG 24140 / F1).